The following is a 410-amino-acid chain: Dual-specificity RNA methyltransferase RlmN (410 aa).

Residue Glu-123 is the Proton acceptor of the active site. The Radical SAM core domain maps to 129–378; it reads EEGRGTLCIS…IRTPRGRDIL (250 aa). Cys-136 and Cys-381 are oxidised to a cystine. [4Fe-4S] cluster-binding residues include Cys-143, Cys-147, and Cys-150. Residues 207–208, Ser-239, 261–263, and Asn-338 contribute to the S-adenosyl-L-methionine site; these read GE and SLH. Cys-381 serves as the catalytic S-methylcysteine intermediate.

It belongs to the radical SAM superfamily. RlmN family. [4Fe-4S] cluster is required as a cofactor.

Its subcellular location is the cytoplasm. It carries out the reaction adenosine(2503) in 23S rRNA + 2 reduced [2Fe-2S]-[ferredoxin] + 2 S-adenosyl-L-methionine = 2-methyladenosine(2503) in 23S rRNA + 5'-deoxyadenosine + L-methionine + 2 oxidized [2Fe-2S]-[ferredoxin] + S-adenosyl-L-homocysteine. The catalysed reaction is adenosine(37) in tRNA + 2 reduced [2Fe-2S]-[ferredoxin] + 2 S-adenosyl-L-methionine = 2-methyladenosine(37) in tRNA + 5'-deoxyadenosine + L-methionine + 2 oxidized [2Fe-2S]-[ferredoxin] + S-adenosyl-L-homocysteine. Its function is as follows. Specifically methylates position 2 of adenine 2503 in 23S rRNA and position 2 of adenine 37 in tRNAs. m2A2503 modification seems to play a crucial role in the proofreading step occurring at the peptidyl transferase center and thus would serve to optimize ribosomal fidelity. The sequence is that of Dual-specificity RNA methyltransferase RlmN from Mesorhizobium japonicum (strain LMG 29417 / CECT 9101 / MAFF 303099) (Mesorhizobium loti (strain MAFF 303099)).